The following is a 102-amino-acid chain: Small ribosomal subunit protein uS10 (102 aa).

This sequence belongs to the universal ribosomal protein uS10 family. In terms of assembly, part of the 30S ribosomal subunit.

Functionally, involved in the binding of tRNA to the ribosomes. This chain is Small ribosomal subunit protein uS10, found in Phenylobacterium zucineum (strain HLK1).